Here is a 471-residue protein sequence, read N- to C-terminus: Tryptophanase (471 aa).

An N6-acetyllysine mark is found at Lys-5, Lys-115, and Lys-156. Position 270 is an N6-(pyridoxal phosphate)lysine (Lys-270). Residue Lys-450 is modified to N6-acetyllysine.

This sequence belongs to the beta-eliminating lyase family. In terms of assembly, homotetramer. It depends on pyridoxal 5'-phosphate as a cofactor.

It carries out the reaction L-tryptophan + H2O = indole + pyruvate + NH4(+). Its pathway is amino-acid degradation; L-tryptophan degradation via pyruvate pathway; indole and pyruvate from L-tryptophan: step 1/1. The chain is Tryptophanase from Escherichia coli (strain SMS-3-5 / SECEC).